Consider the following 695-residue polypeptide: Elongation factor G 2 (695 aa).

The region spanning 5–280 (SLYRNIGIFA…AVVDYLPSPT (276 aa)) is the tr-type G domain. Residues 14–21 (AHVDAGKT), 78–82 (DTPGH), and 132–135 (NKLD) contribute to the GTP site.

Belongs to the TRAFAC class translation factor GTPase superfamily. Classic translation factor GTPase family. EF-G/EF-2 subfamily.

It is found in the cytoplasm. In terms of biological role, catalyzes the GTP-dependent ribosomal translocation step during translation elongation. During this step, the ribosome changes from the pre-translocational (PRE) to the post-translocational (POST) state as the newly formed A-site-bound peptidyl-tRNA and P-site-bound deacylated tRNA move to the P and E sites, respectively. Catalyzes the coordinated movement of the two tRNA molecules, the mRNA and conformational changes in the ribosome. In Vibrio cholerae serotype O1 (strain ATCC 39315 / El Tor Inaba N16961), this protein is Elongation factor G 2.